Here is a 380-residue protein sequence, read N- to C-terminus: uncharacterized protein (380 aa).

The protein belongs to the metallo-dependent hydrolases superfamily.

This is an uncharacterized protein from Methanocaldococcus jannaschii (strain ATCC 43067 / DSM 2661 / JAL-1 / JCM 10045 / NBRC 100440) (Methanococcus jannaschii).